We begin with the raw amino-acid sequence, 443 residues long: KH domain-containing, RNA-binding, signal transduction-associated protein 1 (443 aa).

The tract at residues 1–96 (MQRRDDPAAR…LPPSATASVK (96 aa)) is disordered. The span at 10–21 (RMSRSSGRSGSM) shows a compositional bias: low complexity. 3 positions are modified to phosphoserine: S18, S20, and S29. T33 is modified (phosphothreonine). At R45 the chain carries Asymmetric dimethylarginine; by PRMT1. The residue at position 52 (R52) is an Asymmetric dimethylarginine; partial; by PRMT1. Residue S58 is modified to Phosphoserine. Residue T84 is modified to Phosphothreonine; by MAPK1. Residues K96 and K102 each participate in a glycyl lysine isopeptide (Lys-Gly) (interchain with G-Cter in SUMO2) cross-link. The involved in homodimerization stretch occupies residues 100-260 (ENKYLPELMA…VKKFLVPDMM (161 aa)). S113 bears the Phosphoserine mark. A Glycyl lysine isopeptide (Lys-Gly) (interchain with G-Cter in SUMO2) cross-link involves residue K139. At S150 the chain carries Phosphoserine. Residues 171–197 (NFVGKILGPQGNTIKRLQEETGAKISV) enclose the KH domain. An N6-acetyllysine; alternate modification is found at K175. A Glycyl lysine isopeptide (Lys-Gly) (interchain with G-Cter in SUMO2); alternate cross-link involves residue K175. The residue at position 183 (T183) is a Phosphothreonine. The span at 280 to 293 (PSRGRGVPVRGRGA) shows a compositional bias: low complexity. The tract at residues 280 to 316 (PSRGRGVPVRGRGAAPPPPPVPRGRGVGPPRGALVRG) is disordered. An omega-N-methylarginine mark is found at R282, R284, and R291. An Asymmetric dimethylarginine; by PRMT1 modification is found at R304. A compositionally biased stretch (low complexity) spans 307 to 316 (GPPRGALVRG). Residues R310, R315, R320, and R325 each carry the omega-N-methylarginine; by PRMT1 modification. R320 bears the Dimethylated arginine; in A2780 ovarian carcinoma cell line mark. A disordered region spans residues 327-346 (ATVTRGVPPPPTVRGAPAPR). Dimethylated arginine; in A2780 ovarian carcinoma cell line occurs at positions 331 and 340. R331 carries the asymmetric dimethylarginine; alternate modification. R331 bears the Omega-N-methylarginine; by PRMT1; alternate mark. R340 bears the Omega-N-methylarginine; by PRMT1 mark. Positions 351-443 (GIQRIPLPPP…AYREHPYGRY (93 aa)) are interaction with HNRNPA1. Y387 is modified (phosphotyrosine). S390 bears the Phosphoserine mark. The segment at 400–420 (GHGEVQDSYEAYGQDDWNGTR) is interaction with ZBTB7A. Residues 411–443 (YGQDDWNGTRPSLKAPPARPVKGAYREHPYGRY) are disordered. A Glycyl lysine isopeptide (Lys-Gly) (interchain with G-Cter in SUMO2) cross-link involves residue K432. The segment covering 434–443 (AYREHPYGRY) has biased composition (basic and acidic residues). 3 positions are modified to phosphotyrosine; by PTK6: Y435, Y440, and Y443.

The protein belongs to the KHDRBS family. As to quaternary structure, self-associates to form homooligomers when bound to RNA, oligomerization appears to be limited when binding to proteins; dimerization increases RNA affinity. Forms a trimeric complex in the nucleus consisting of BANP, HDAC6 and KHDRBS1/SAM68; HDAC6 keeps KHDRBS1 in a deacetylated state which inhibits the inclusion of CD44 alternate exons. The complex is disrupted by MAPK1/MAPK3-mediated phosphorylation of BANP which results in BANP export to the cytoplasm. This facilitates acetylation of KHDRBS1 and CD44 variant exon inclusion. Interacts with KHDRBS3/SLIM-2. Interacts with KHDRBS2/SLIM-1; heterooligomer formation of KHDRBS family proteins may modulate RNA substrate specificity. Interacts with RASA1, LCK, FYN, PTPN6, PLCG1, GRB2, CBL, JAK3, PIK3R, STAT3, APC, HNRNPA1. Interacts with PTK6 (via SH3 and SH2 domains). Forms a complex with ILF2, ILF3, YLPM1, RBMX, NCOA5 and PPP1CA. Does not interact with TPR. Interacts with PRMT1. Binds WBP4/FBP21 (via WW domains), FNBP4/FBP30 (via WW domains). Interacts (via Arg/Gly-rich-flanked Pro-rich regions) with FYN (via the SH3 domain). Interacts with the non-receptor tyrosine kinase SRMS; the interaction leads to phosphorylation of KHDRBS1. Interacts with ZBTB7A; negatively regulates KHDRBS1 splicing activity toward BCL2L1. In terms of processing, tyrosine phosphorylated by several non-receptor tyrosine kinases including LCK, FYN and JAK3. Also tyrosine phosphorylated by the non-receptor tyrosine kinase SRMS in an EGF-dependent manner. Negatively correlates with ability to bind RNA but required for many interactions with proteins. Phosphorylation by PTK6 negatively regulates its RNA binding ability. Phosphorylation by PTK6 at Tyr-440 dictates the nuclear localization of KHDRBS1. Phosphorylation at Tyr-387 disrupts interaction with APC. Phosphorylation at tyrosine residues by FYN inverts activity on modulation of BCL2L1 alternative splicing. Post-translationally, acetylated. Positively correlates with ability to bind RNA. Deacetylated by HDAC6; this regulates alternative splicing by inhibiting the inclusion of CD44 alternate exons. Arginine methylation is required for nuclear localization. Also can affect interaction with other proteins. Inhibits interaction with Src-like SH3 domains, but not interaction with WW domains of WBP4/FBP21 and FNBP4/FBP30. In terms of tissue distribution, ubiquitously expressed in all tissue examined. Isoform 1 is expressed at lower levels in brain, skeletal muscle, and liver whereas isoform 3 is intensified in skeletal muscle and in liver.

It localises to the nucleus. Its subcellular location is the cytoplasm. The protein localises to the membrane. Functionally, recruited and tyrosine phosphorylated by several receptor systems, for example the T-cell, leptin and insulin receptors. Once phosphorylated, functions as an adapter protein in signal transduction cascades by binding to SH2 and SH3 domain-containing proteins. Role in G2-M progression in the cell cycle. Represses CBP-dependent transcriptional activation apparently by competing with other nuclear factors for binding to CBP. Also acts as a putative regulator of mRNA stability and/or translation rates and mediates mRNA nuclear export. Positively regulates the association of constitutive transport element (CTE)-containing mRNA with large polyribosomes and translation initiation. According to some authors, is not involved in the nucleocytoplasmic export of unspliced (CTE)-containing RNA species according to. RNA-binding protein that plays a role in the regulation of alternative splicing and influences mRNA splice site selection and exon inclusion. Binds to RNA containing 5'-[AU]UAA-3' as a bipartite motif spaced by more than 15 nucleotides. Binds poly(A). Can regulate CD44 alternative splicing in a Ras pathway-dependent manner. In cooperation with HNRNPA1 modulates alternative splicing of BCL2L1 by promoting splicing toward isoform Bcl-X(S), and of SMN1. Can regulate alternative splicing of NRXN1 and NRXN3 in the laminin G-like domain 6 containing the evolutionary conserved neurexin alternative spliced segment 4 (AS4) involved in neurexin selective targeting to postsynaptic partners. In a neuronal activity-dependent manner cooperates synergistically with KHDRBS2/SLIM-1 in regulation of NRXN1 exon skipping at AS4. The cooperation with KHDRBS2/SLIM-1 is antagonistic for regulation of NXRN3 alternative splicing at AS4. In terms of biological role, isoform 3, which is expressed in growth-arrested cells only, inhibits S phase. The protein is KH domain-containing, RNA-binding, signal transduction-associated protein 1 of Homo sapiens (Human).